We begin with the raw amino-acid sequence, 64 residues long: uncharacterized protein (64 aa).

Residues 1–26 form the signal peptide; that stretch reads MVVKENFCGACLTIPLAFAGAGTAIG. The chain crosses the membrane as a helical span at residues 33–53; that stretch reads IKKWSIVITIISLLLTVWFIY.

It belongs to the IIV-6 010R family.

The protein localises to the host membrane. This is an uncharacterized protein from Aedes vexans (Inland floodwater mosquito).